We begin with the raw amino-acid sequence, 300 residues long: Rhodopsin (300 aa).

At 1 to 18 the chain is on the extracellular side; the sequence is LHMIHLHWYQYPPMNPMM. A helical transmembrane segment spans residues 19-43; that stretch reads YPLLLVFMLITGILCLAGNFVTIWV. Topologically, residues 44–55 are cytoplasmic; sequence FMNTKSLRTPAN. The helical transmembrane segment at 56-78 threads the bilayer; sequence LLVVNLAMSDFLMMFTMFPPMMV. Topologically, residues 79-92 are extracellular; it reads TCYYHTWTLGATFC. Cys-92 and Cys-168 are disulfide-bonded. Residues 93–115 traverse the membrane as a helical segment; that stretch reads QVYAFLGNLCGCASIWTMVFITF. Positions 116–118 match the 'Ionic lock' involved in activated form stabilization motif; it reads DRY. Residues 116–134 are Cytoplasmic-facing; it reads DRYNVIVKGVAGEPLSTKK. The helical transmembrane segment at 135-155 threads the bilayer; it reads ASLWILTIWILSITWCIAPFF. Topologically, residues 156-181 are extracellular; sequence GWNRYVPEGNTGCGTDYLSEDILSRS. The helical transmembrane segment at 182–203 threads the bilayer; that stretch reads YLYIYSTWVYFLPLAITIYCHV. Over 204–244 the chain is Cytoplasmic; it reads FIIKAVAAHEKGMRDQAKKMGIKSLRNEEAQKTSAECRLAK. A helical membrane pass occupies residues 245-266; it reads IAMTTVALWFIAWTPYLLINWV. Residues 267–277 lie on the Extracellular side of the membrane; it reads GMFARSYLSPV. A helical membrane pass occupies residues 278–299; that stretch reads YTIWGYVFAKANAVYNPIVYAI. Position 287 is an N6-(retinylidene)lysine (Lys-287).

Belongs to the G-protein coupled receptor 1 family. Opsin subfamily. As to quaternary structure, homodimer. Interacts with GNAQ. Contains one covalently linked retinal chromophore.

It is found in the cell projection. It localises to the rhabdomere membrane. Its function is as follows. Photoreceptor required for image-forming vision at low light intensity. Can use both retinal and 3-dehydroretinal as visual pigment. Light-induced isomerization of 11-cis to all-trans retinal triggers a conformational change that activates signaling via G-proteins. Signaling via GNAQ probably mediates the activation of phospholipase C. The protein is Rhodopsin (RHO) of Cambarus maculatus (Freckled crayfish).